A 149-amino-acid chain; its full sequence is Large ribosomal subunit protein bL9 (149 aa).

This sequence belongs to the bacterial ribosomal protein bL9 family.

Functionally, binds to the 23S rRNA. In Klebsiella pneumoniae (strain 342), this protein is Large ribosomal subunit protein bL9.